The sequence spans 168 residues: Disulfide bond formation protein B (168 aa).

At 1 to 6 the chain is on the cytoplasmic side; that stretch reads MTSRWI. Residues 7 to 23 traverse the membrane as a helical segment; that stretch reads FGLVFLVCAGLLAVAFY. Over 24–41 the chain is Periplasmic; it reads MEHVMGLEPCPLCWLQRF. Cys-33 and Cys-36 are disulfide-bonded. Residues 42–58 traverse the membrane as a helical segment; the sequence is GFMGAGLVSLLAFLHGP. At 59-65 the chain is on the cytoplasmic side; that stretch reads RGFGNRV. A helical transmembrane segment spans residues 66-82; sequence YGLLLIVAAGAGLAVAG. Topologically, residues 83 to 139 are periplasmic; sequence RQLWLQSLPADQVPACGPSVDYMLEVLPWFEVLQTALKGTGDCAEVVWRFLGLSIPG. Residues Cys-98 and Cys-125 are joined by a disulfide bond. Residues 140–158 form a helical membrane-spanning segment; sequence WTAVFFSLLIVLGLFVMLR. The Cytoplasmic segment spans residues 159-168; sequence RYSPRDWLQS.

This sequence belongs to the DsbB family.

The protein localises to the cell inner membrane. Its function is as follows. Required for disulfide bond formation in some periplasmic proteins. Acts by oxidizing the DsbA protein. This chain is Disulfide bond formation protein B, found in Marinobacter nauticus (strain ATCC 700491 / DSM 11845 / VT8) (Marinobacter aquaeolei).